Consider the following 178-residue polypeptide: Large ribosomal subunit protein uL6 (178 aa).

The protein belongs to the universal ribosomal protein uL6 family. As to quaternary structure, part of the 50S ribosomal subunit.

Functionally, this protein binds to the 23S rRNA, and is important in its secondary structure. It is located near the subunit interface in the base of the L7/L12 stalk, and near the tRNA binding site of the peptidyltransferase center. This is Large ribosomal subunit protein uL6 from Campylobacter hominis (strain ATCC BAA-381 / DSM 21671 / CCUG 45161 / LMG 19568 / NCTC 13146 / CH001A).